Here is a 149-residue protein sequence, read N- to C-terminus: Extracellular protease inhibitor 1 (149 aa).

Positions 1–16 are cleaved as a signal peptide; the sequence is MKSALLFTLVVAAVHA. Kazal-like domains follow at residues 29–86 and 88–141; these read ESNE…SSTG and QPPS…ACVG. 2 cysteine pairs are disulfide-bonded: Cys35-Cys65 and Cys39-Cys58. Asn67 carries N-linked (GlcNAc...) asparagine glycosylation. 3 disulfide bridges follow: Cys94-Cys124, Cys98-Cys117, and Cys106-Cys139.

As to quaternary structure, interacts with host subtilisin-like protease P69B.

It localises to the secreted. Functionally, secreted effector that interacts with and inhibits the pathogenesis-related P69B subtilisin-like serine protease of host tomato. Inhibition of host proteases by a pathogen extracellular protease inhibitor forms a specific type of defense-counterdefense mechanism between plants and microbial pathogens. This chain is Extracellular protease inhibitor 1, found in Phytophthora infestans (Potato late blight agent).